The sequence spans 350 residues: Enoyl-[acyl-carrier-protein] reductase, mitochondrial (350 aa).

The N-terminal 14 residues, 1 to 14, are a transit peptide targeting the mitochondrion; it reads MNSTRNIISLVRRY. Residue tyrosine 69 is the Proton donor of the active site. NADP(+)-binding positions include asparagine 143, 169-172, 192-194, 261-264, 286-288, and lysine 343; these read NSMV, RDG, YGGM, and FWL.

This sequence belongs to the zinc-containing alcohol dehydrogenase family. Quinone oxidoreductase subfamily. As to quaternary structure, homodimer.

It localises to the mitochondrion. It catalyses the reaction a 2,3-saturated acyl-[ACP] + NADP(+) = a (2E)-enoyl-[ACP] + NADPH + H(+). In terms of biological role, catalyzes the NADPH-dependent reduction of trans-2-enoyl thioesters in mitochondrial fatty acid synthesis (fatty acid synthesis type II). Fatty acid chain elongation in mitochondria uses acyl carrier protein (ACP) as an acyl group carrier, but the enzyme accepts both ACP and CoA thioesters as substrates in vitro. The sequence is that of Enoyl-[acyl-carrier-protein] reductase, mitochondrial (mecr) from Dictyostelium discoideum (Social amoeba).